Reading from the N-terminus, the 305-residue chain is Methionyl-tRNA formyltransferase (305 aa).

(6S)-5,6,7,8-tetrahydrofolate is bound at residue Ser108 to Pro111.

This sequence belongs to the Fmt family.

The enzyme catalyses L-methionyl-tRNA(fMet) + (6R)-10-formyltetrahydrofolate = N-formyl-L-methionyl-tRNA(fMet) + (6S)-5,6,7,8-tetrahydrofolate + H(+). Attaches a formyl group to the free amino group of methionyl-tRNA(fMet). The formyl group appears to play a dual role in the initiator identity of N-formylmethionyl-tRNA by promoting its recognition by IF2 and preventing the misappropriation of this tRNA by the elongation apparatus. The protein is Methionyl-tRNA formyltransferase of Thermus thermophilus (strain ATCC 27634 / DSM 579 / HB8).